The following is a 428-amino-acid chain: Probable pectin lyase F (428 aa).

Residues 1-20 (MVLLHPLLTAAALLGASARA) form the signal peptide. A disulfide bond links Cys-83 and Cys-107. Residue Arg-257 is part of the active site. The N-linked (GlcNAc...) asparagine glycan is linked to Asn-276. Cys-324 and Cys-332 are disulfide-bonded. The interval 383–428 (GSGGSGAASSSVSITPSPTSSAIPSSSATPSSSAYARRHYARHHHY) is disordered. Residues 389–417 (AASSSVSITPSPTSSAIPSSSATPSSSAY) are compositionally biased toward low complexity. Basic residues predominate over residues 418-428 (ARRHYARHHHY).

The protein belongs to the polysaccharide lyase 1 family.

It localises to the secreted. The catalysed reaction is Eliminative cleavage of (1-&gt;4)-alpha-D-galacturonan methyl ester to give oligosaccharides with 4-deoxy-6-O-methyl-alpha-D-galact-4-enuronosyl groups at their non-reducing ends.. In terms of biological role, pectinolytic enzymes consist of four classes of enzymes: pectin lyase, polygalacturonase, pectin methylesterase and rhamnogalacturonase. Among pectinolytic enzymes, pectin lyase is the most important in depolymerization of pectin, since it cleaves internal glycosidic bonds of highly methylated pectins. In Aspergillus oryzae (strain ATCC 42149 / RIB 40) (Yellow koji mold), this protein is Probable pectin lyase F (pelF).